The chain runs to 715 residues: Inducible lysine decarboxylase (715 aa).

Lys367 carries the post-translational modification N6-(pyridoxal phosphate)lysine.

This sequence belongs to the Orn/Lys/Arg decarboxylase class-I family. Homodecamer. Interacts with RavA. The cofactor is pyridoxal 5'-phosphate.

It localises to the cytoplasm. It carries out the reaction L-lysine + H(+) = cadaverine + CO2. In Escherichia coli O157:H7, this protein is Inducible lysine decarboxylase (cadA).